Reading from the N-terminus, the 199-residue chain is MRYSPLIDQLIESLRCLPGVGPRSAQRMAFHLLQRDRDGGRRLATAIREAMDQVGHCRQCRVLTEEPVCGLCASDRRDRSLLCVVEGPADVFALEQATDFRGLYFVLMGRLSPLDGVGPEALGLDRLEARLAEGEVQEVILATSPTVEGEATSHYIAELAHQRGVRTTRIAHGVPMGGELEYVDSGTLSHAFAGRRDYD.

Residues 57 to 72 form a C4-type zinc finger; sequence CRQCRVLTEEPVCGLC. Positions 80–175 constitute a Toprim domain; that stretch reads SLLCVVEGPA…RTTRIAHGVP (96 aa).

It belongs to the RecR family.

In terms of biological role, may play a role in DNA repair. It seems to be involved in an RecBC-independent recombinational process of DNA repair. It may act with RecF and RecO. The chain is Recombination protein RecR from Alkalilimnicola ehrlichii (strain ATCC BAA-1101 / DSM 17681 / MLHE-1).